The chain runs to 911 residues: Alpha-actinin-4 (911 aa).

Residues 1-269 are actin-binding; the sequence is MVDYHAANQS…YVSSFYHAFS (269 aa). Residues 12 to 26 form an interaction with VCL region; the sequence is QYGPSSAGNGAGGGG. At Y31 the chain carries Phosphotyrosine. An interaction with VCL region spans residues 40-61; sequence RDLLLDPAWEKQQRKTFTAWCN. Calponin-homology (CH) domains lie at 50–154 and 163–269; these read KQQR…LRFA and TSAK…HAFS. Positions 84-88 match the LXXLL motif motif; sequence LMLLL. The segment at 108 to 126 is interaction with VCL; the sequence is KINNVNKALDFIASKGVKL. K114 is modified (N6-acetyllysine). The segment at 177–192 is polyphosphoinositide (PIP2)-binding; it reads TAPYKNVNVQNFHISW. Position 214 is an N6-acetyllysine (K214). A Phosphothreonine modification is found at T249. Spectrin repeat units follow at residues 293-403, 413-518, 528-639, and 649-752; these read HLME…WLLN, HLAE…ALEK, QLHL…ALLE, and HLRR…EVEN. K592 and K625 each carry N6-acetyllysine. A Phosphoserine modification is found at S696. The tract at residues 736 to 911 is mediates interaction with MICALL2; the sequence is WEQLLTTIAR…STALYGESDL (176 aa). 2 EF-hand domains span residues 765-800 and 806-841; these read EQMQ…LGYD and QGEA…ETTD. D778 contacts Ca(2+). K779 is subject to N6-acetyllysine. D780 and E789 together coordinate Ca(2+). K859 bears the N6-acetyllysine mark. At S909 the chain carries Phosphoserine.

This sequence belongs to the alpha-actinin family. Homodimer; antiparallel. Binds TRIM3 at the N-terminus. Interacts with MICALL2 (preferentially in opened conformation); stimulated by RAB13 activation. Identified in a complex with CASK, IQGAP1, MAGI2, NPHS1, SPTAN1 and SPTBN1. Identified in a IGF2BP1-dependent mRNP granule complex containing untranslated mRNAs. Component of the CART complex, at least composed of ACTN4, HGS/HRS, MYO5B and TRIM3. Interacts with MAGI1. Interacts with PDLIM2. Interacts with PPARG and RARA. Binds to VCL; this interaction triggers VCL conformational changes. Interacts with SEPTIN14. Interacts with IGSF8. As to expression, widely expressed.

The protein localises to the nucleus. It is found in the cytoplasm. It localises to the cell junction. The protein resides in the cytoskeleton. Its subcellular location is the stress fiber. The protein localises to the perinuclear region. Functionally, F-actin cross-linking protein which is thought to anchor actin to a variety of intracellular structures. This is a bundling protein. Probably involved in vesicular trafficking via its association with the CART complex. The CART complex is necessary for efficient transferrin receptor recycling but not for EGFR degradation. Involved in tight junction assembly in epithelial cells probably through interaction with MICALL2. Links MICALL2 to the actin cytoskeleton and recruits it to the tight junctions. May also function as a transcriptional coactivator, stimulating transcription mediated by the nuclear hormone receptors PPARG and RARA. Association with IGSF8 regulates the immune synapse formation and is required for efficient T-cell activation. The sequence is that of Alpha-actinin-4 from Homo sapiens (Human).